Here is a 346-residue protein sequence, read N- to C-terminus: MNPHATPVLVLSLALGTTITISSNHWVLAWTGLEINTLAIIPLISKSHHPRAVEAATKYFLTQAAASALVLFSSMTNAWATGQWDITQLNHPTSCLLLTAAIAIKLGLVPFHFWFPEVLQGSPLMTALLLSTLMKFPPLTLLLMTSKSLNPALLTTMALASAALGGWMGLNQTQTRKILAFSSISHLGWIAIILVYSPKLALLTFYLYAIMTSAVFMALNKIKALNLSMVLTSWTKTPVLNATLMLVLLSLAGLPPLTGFMPKWLIIQELTKQEMTPAAMAIAMLSLLSLFFYLRLAYHSTITLPPNSSNHMKQWYTSKPPSTPTAILASLSILLLPLSPMIHAIV.

Transmembrane regions (helical) follow at residues 1-21 (MNPHATPVLVLSLALGTTITI), 25-45 (HWVLAWTGLEINTLAIIPLIS), 60-80 (FLTQAAASALVLFSSMTNAWA), 95-115 (CLLLTAAIAIKLGLVPFHFWF), 124-144 (LMTALLLSTLMKFPPLTLLLM), 149-169 (LNPALLTTMALASAALGGWMG), 178-195 (ILAFSSISHLGWIAIILV), 200-219 (LALLTFYLYAIMTSAVFMAL), 242-262 (ATLMLVLLSLAGLPPLTGFMP), 274-294 (EMTPAAMAIAMLSLLSLFFYL), and 326-346 (AILASLSILLLPLSPMIHAIV).

The protein belongs to the complex I subunit 2 family.

It is found in the mitochondrion inner membrane. The enzyme catalyses a ubiquinone + NADH + 5 H(+)(in) = a ubiquinol + NAD(+) + 4 H(+)(out). Core subunit of the mitochondrial membrane respiratory chain NADH dehydrogenase (Complex I) that is believed to belong to the minimal assembly required for catalysis. Complex I functions in the transfer of electrons from NADH to the respiratory chain. The immediate electron acceptor for the enzyme is believed to be ubiquinone. The polypeptide is NADH-ubiquinone oxidoreductase chain 2 (MT-ND2) (Mareca falcata (Falcated duck)).